A 705-amino-acid polypeptide reads, in one-letter code: ATP-dependent DNA helicase Q-like 2 (705 aa).

Residues 1 to 30 (MESEAIQEDLQNLDVELKDVQGQISALIEH) are a coiled coil. The Helicase ATP-binding domain occupies 98–273 (INAIMTGRDV…IEMLHIPKCV (176 aa)). 111 to 118 (MAAGGGKS) serves as a coordination point for ATP. The DEAH box motif lies at 217-220 (DEAH). Residues 298-450 (VVDEIAEFIR…DIVRYCQSKT (153 aa)) form the Helicase C-terminal domain. Residues 591-670 (SITFSGLELK…MRHEAVSEQL (80 aa)) form the HRDC domain. The tract at residues 668-705 (EQLVEDPTKEETCKSRLRKRAKTQKDVVLVESSGEEEA) is disordered.

It belongs to the helicase family. RecQ subfamily. As to quaternary structure, interacts with WEX. The cofactor is Mg(2+). Mn(2+) serves as cofactor. Expressed in shoots and flowers. Expressed in young leaves, inflorescences, roots, shoot apical meristem, young siliques, and mature green siliques.

The protein localises to the nucleus. The enzyme catalyses Couples ATP hydrolysis with the unwinding of duplex DNA by translocating in the 3'-5' direction.. It catalyses the reaction ATP + H2O = ADP + phosphate + H(+). In terms of biological role, 3'-5' DNA helicase that may play a role in the repair of DNA. Its DNA unwinding activity in vitro is dependent on magnesium, and ATP or dATP. Can use GTP/dGTP, CTP/dCTP or UTP/dUTP as nucleotide cofactors. Catalyzes Holliday junction branch migration and replication fork regression. Disrupts D-loop structures. Unwinds G-quadruplex DNA, found in telomeric DNA. The polypeptide is ATP-dependent DNA helicase Q-like 2 (Arabidopsis thaliana (Mouse-ear cress)).